We begin with the raw amino-acid sequence, 228 residues long: UPF0758 protein RALTA_A2508 (228 aa).

The region spanning 102–224 (GFDSPDSVRS…IRSLAESCER (123 aa)) is the MPN domain. The Zn(2+) site is built by His173, His175, and Asp186. Positions 173–186 (HNHPRGTTAPSQSD) match the JAMM motif motif.

It belongs to the UPF0758 family.

This chain is UPF0758 protein RALTA_A2508, found in Cupriavidus taiwanensis (strain DSM 17343 / BCRC 17206 / CCUG 44338 / CIP 107171 / LMG 19424 / R1) (Ralstonia taiwanensis (strain LMG 19424)).